The sequence spans 363 residues: Putative type I specificity subunit S.MpnORF507P (363 aa).

Belongs to the type-I restriction system S methylase family. In terms of assembly, the methyltransferase is composed of M and S polypeptides.

Its function is as follows. The specificity (S) subunit of a type I methyltransferase (MTase); this subunit dictates DNA sequence specificity. The single R subunit has multiple frameshifts and is probably not expressed. This is Putative type I specificity subunit S.MpnORF507P from Mycoplasma pneumoniae (strain ATCC 29342 / M129 / Subtype 1) (Mycoplasmoides pneumoniae).